Consider the following 411-residue polypeptide: Putative competence-damage inducible protein (411 aa).

Belongs to the CinA family.

This is Putative competence-damage inducible protein from Clostridium acetobutylicum (strain ATCC 824 / DSM 792 / JCM 1419 / IAM 19013 / LMG 5710 / NBRC 13948 / NRRL B-527 / VKM B-1787 / 2291 / W).